The primary structure comprises 193 residues: Ion-translocating oxidoreductase complex subunit A (193 aa).

The next 6 membrane-spanning stretches (helical) occupy residues 4 to 24 (LALI…KFLG), 38 to 58 (AMGM…CSYL), 65 to 85 (APLG…AVVV), 102 to 122 (VLGI…VALL), 134 to 154 (AVYG…FAAL), and 171 to 191 (SVAL…AGLV).

Belongs to the NqrDE/RnfAE family. As to quaternary structure, the complex is composed of six subunits: RnfA, RnfB, RnfC, RnfD, RnfE and RnfG.

Its subcellular location is the cell inner membrane. Functionally, part of a membrane-bound complex that couples electron transfer with translocation of ions across the membrane. This chain is Ion-translocating oxidoreductase complex subunit A, found in Alkalilimnicola ehrlichii (strain ATCC BAA-1101 / DSM 17681 / MLHE-1).